We begin with the raw amino-acid sequence, 155 residues long: Nucleoside diphosphate kinase, cytosolic (155 aa).

ATP-binding residues include lysine 16, phenylalanine 64, arginine 92, threonine 98, arginine 109, and asparagine 119. Histidine 122 serves as the catalytic Pros-phosphohistidine intermediate.

It belongs to the NDK family. Homohexamer. It depends on Mg(2+) as a cofactor.

The protein resides in the cytoplasm. It catalyses the reaction a 2'-deoxyribonucleoside 5'-diphosphate + ATP = a 2'-deoxyribonucleoside 5'-triphosphate + ADP. The catalysed reaction is a ribonucleoside 5'-diphosphate + ATP = a ribonucleoside 5'-triphosphate + ADP. Major role in the synthesis of nucleoside triphosphates other than ATP. In Dictyostelium discoideum (Social amoeba), this protein is Nucleoside diphosphate kinase, cytosolic (ndkC-1).